A 227-amino-acid polypeptide reads, in one-letter code: PKHD-type hydroxylase BamMC406_4714 (227 aa).

In terms of domain architecture, Fe2OG dioxygenase spans 78–178 (KVFPPLFNRY…RVASFFWIQS (101 aa)). Fe cation is bound by residues histidine 96, aspartate 98, and histidine 159. Arginine 169 is a 2-oxoglutarate binding site.

It depends on Fe(2+) as a cofactor. L-ascorbate is required as a cofactor.

In Burkholderia ambifaria (strain MC40-6), this protein is PKHD-type hydroxylase BamMC406_4714.